The following is an 882-amino-acid chain: Alanine--tRNA ligase (882 aa).

Histidine 571, histidine 575, cysteine 673, and histidine 677 together coordinate Zn(2+).

The protein belongs to the class-II aminoacyl-tRNA synthetase family. Zn(2+) is required as a cofactor.

It localises to the cytoplasm. The catalysed reaction is tRNA(Ala) + L-alanine + ATP = L-alanyl-tRNA(Ala) + AMP + diphosphate. Catalyzes the attachment of alanine to tRNA(Ala) in a two-step reaction: alanine is first activated by ATP to form Ala-AMP and then transferred to the acceptor end of tRNA(Ala). Also edits incorrectly charged Ser-tRNA(Ala) and Gly-tRNA(Ala) via its editing domain. This Desulfotalea psychrophila (strain LSv54 / DSM 12343) protein is Alanine--tRNA ligase.